Reading from the N-terminus, the 1837-residue chain is AF4/FMR2 family member lilli (1837 aa).

Disordered stretches follow at residues 1-25 (MAQQQQQQQHHHHLQHQQQQQQQQQ), 65-109 (NLYS…PRRL), 162-295 (IQQQ…LHNG), 455-592 (QQLP…KKKY), 605-712 (TGLL…PGNV), 797-852 (PKSQ…LQIP), 868-1250 (NNMQ…GGAK), 1267-1311 (QQQQ…GLAS), and 1344-1466 (APSS…DPML). Residues 16 to 25 (HQQQQQQQQQ) are compositionally biased toward low complexity. The segment covering 84-109 (REKYERQQGIQSDDRETSLFSEPRRL) has biased composition (basic and acidic residues). 3 stretches are compositionally biased toward low complexity: residues 162–179 (IQQQVSSSISSSASVASS), 187–200 (QTQQQQQQQQQQQQ), and 247–264 (NSNSSSITNNAAASSSSS). At threonine 468 the chain carries Phosphothreonine. Residues 475-488 (LKIEKNPILEKQDS) show a composition bias toward basic and acidic residues. A compositionally biased stretch (acidic residues) spans 490–500 (LENDLELSESE). Serine 497 and serine 499 each carry phosphoserine. Composition is skewed to low complexity over residues 509 to 529 (SPGSSSNGSESDSTESGSESS) and 542 to 552 (QQQQQTQQQQL). Residues 553 to 563 (HGHHPQSHHHQ) show a composition bias toward basic residues. Residues 564–583 (QFLQQQLQRQQQQQQQQQQL) are compositionally biased toward low complexity. Composition is skewed to gly residues over residues 612-633 (GGLGSSSGNNSSGGGGGSGNGG) and 641-673 (GSMGGSGGSSSSGGASGGGGGGGGSGSSSGIGS). Polar residues-rich tracts occupy residues 678-690 (NKTPSPTDSNKWN) and 698-711 (PTSQTSSESVSPGN). The span at 815–837 (SESATSGSSSSSCSSSDSAASAS) shows a compositional bias: low complexity. Residues 868 to 880 (NNMQKSQSMSVTV) are compositionally biased toward polar residues. Basic residues predominate over residues 892 to 902 (PRQKKPRKKKM). 2 positions are modified to phosphoserine: serine 913 and serine 914. 2 stretches are compositionally biased toward low complexity: residues 927-951 (VVAQAQAAVVPPPSTNSTTTSATTT) and 961-1013 (QQQQ…SSVL). The a.T hook DNA-binding region spans 952–964 (KKGRGRPRKQQQQ). Residues serine 974 and serine 976 each carry the phosphoserine modification. The segment covering 1021–1033 (SQSSSNGNTPTKK) has biased composition (polar residues). 4 stretches are compositionally biased toward low complexity: residues 1034–1049 (MSSIPMMPAAAASAAA), 1056–1091 (AVAAANAVAASSSSSDEESSSSSCSTSKSSSSSSSS), 1130–1139 (GSSSPTSSSS), and 1157–1173 (ISNSNSNSNNNVIVNNN). Residues 1174–1184 (LQQQAMPQQSP) show a composition bias toward polar residues. The span at 1189–1212 (LSGGSQQLSSSDSSSSSSGSSSSS) shows a compositional bias: low complexity. Over residues 1217–1234 (DAKREKNRERKPKSDKNK) the composition is skewed to basic and acidic residues. The span at 1267-1276 (QQQQQQQQVQ) shows a compositional bias: low complexity. Residues 1345 to 1355 (PSSSNQQNGHL) show a composition bias toward polar residues. The segment covering 1373–1386 (KVKHEHHQLHHHSQ) has biased composition (basic residues). Basic and acidic residues-rich tracts occupy residues 1393 to 1407 (VKPEPELDSLYETKF) and 1416 to 1432 (FQLKQERDRDRNRERDQ). Position 1517 is a phosphoserine (serine 1517). A compositionally biased stretch (polar residues) spans 1550-1560 (AVQTTPPTSVT). Disordered stretches follow at residues 1550–1571 (AVQTTPPTSVTGAGAPASLVSQ) and 1727–1756 (GNTPSSISPSNSVGSQGSGSNTPPGKIVPQ). Over residues 1727–1747 (GNTPSSISPSNSVGSQGSGSN) the composition is skewed to low complexity.

The protein belongs to the AF4 family.

The protein localises to the nucleus. Its function is as follows. Has a role in transcriptional regulation. Acts in parallel with the Ras/MAPK and the PI3K/PKB pathways in the control of cell identity and cellular growth. Essential for regulation of the cytoskeleton and cell growth but not for cell proliferation or growth rate. Required specifically for the microtubule-based basal transport of lipid droplets. Plays a partially redundant function downstream of Raf in cell fate specification in the developing eye. Pair-rule protein that regulates embryonic cellularization, gastrulation and segmentation. The protein is AF4/FMR2 family member lilli of Drosophila willistoni (Fruit fly).